Reading from the N-terminus, the 474-residue chain is Cell division protein FtsP (474 aa).

Positions 1–27 (MSLSRRQFIQAAGLALGAGSLPLRAQA) form a signal peptide, tat-type signal. Residues 229–288 (WVRLRLLNASNARRYTLQLSDGRPLYVVASDQGFLPAPVAVQQLSLAPGERREVVIDMSQ) enclose the Plastocyanin-like domain.

It belongs to the FtsP family. Post-translationally, predicted to be exported by the Tat system. The position of the signal peptide cleavage has not been experimentally proven.

The protein localises to the periplasm. Its function is as follows. Cell division protein that is required for growth during stress conditions. May be involved in protecting or stabilizing the divisomal assembly under conditions of stress. This Yersinia pestis protein is Cell division protein FtsP.